The sequence spans 203 residues: Small ribosomal subunit protein uS4c (203 aa).

The S4 RNA-binding domain occupies 89 to 152 (MRLDNILFRL…QSRTLIQNSL (64 aa)).

This sequence belongs to the universal ribosomal protein uS4 family. Part of the 30S ribosomal subunit. Contacts protein S5. The interaction surface between S4 and S5 is involved in control of translational fidelity.

Its subcellular location is the plastid. In terms of biological role, one of the primary rRNA binding proteins, it binds directly to 16S rRNA where it nucleates assembly of the body of the 30S subunit. Functionally, with S5 and S12 plays an important role in translational accuracy. The chain is Small ribosomal subunit protein uS4c (rps4) from Orobanche minor (Small broomrape).